A 202-amino-acid chain; its full sequence is LexA repressor (202 aa).

Residues 29 to 49 constitute a DNA-binding region (H-T-H motif); that stretch reads VREICEATGLKSTSTVHGHLT. Catalysis depends on for autocatalytic cleavage activity residues S126 and K163.

This sequence belongs to the peptidase S24 family. In terms of assembly, homodimer.

It carries out the reaction Hydrolysis of Ala-|-Gly bond in repressor LexA.. In terms of biological role, represses a number of genes involved in the response to DNA damage (SOS response), including recA and lexA. In the presence of single-stranded DNA, RecA interacts with LexA causing an autocatalytic cleavage which disrupts the DNA-binding part of LexA, leading to derepression of the SOS regulon and eventually DNA repair. This is LexA repressor from Caldicellulosiruptor saccharolyticus (strain ATCC 43494 / DSM 8903 / Tp8T 6331).